The chain runs to 540 residues: Intestinal-type alkaline phosphatase 1 (540 aa).

Residues 1–20 form the signal peptide; sequence MQGDWVLLLLLGLRIHLSFG. Residue Asp-62 participates in Mg(2+) binding. Residues Asp-62 and Ser-112 each contribute to the Zn(2+) site. Ser-112 acts as the Phosphoserine intermediate in catalysis. Cys-141 and Cys-203 are disulfide-bonded. The N-linked (GlcNAc...) asparagine glycan is linked to Asn-142. Mg(2+) is bound at residue Ser-175. Residues Glu-236, Phe-289, and Glu-290 each contribute to the Ca(2+) site. A glycan (N-linked (GlcNAc...) asparagine) is linked at Asn-301. Asp-305 is a binding site for Ca(2+). Glu-331 provides a ligand contact to Mg(2+). Zn(2+) contacts are provided by Asp-336, His-340, Asp-377, and His-378. Asn-428 is a glycosylation site (N-linked (GlcNAc...) asparagine). His-452 lines the Zn(2+) pocket. Cys-487 and Cys-494 are joined by a disulfide. Residue Asn-511 is the site of GPI-anchor amidated asparagine attachment. A propeptide spans 512–540 (removed in mature form); that stretch reads SAITMNNVLLSLQLLVSMLLLVGTALVVS.

This sequence belongs to the alkaline phosphatase family. As to quaternary structure, homodimer. Requires Mg(2+) as cofactor. Zn(2+) is required as a cofactor. The cofactor is Ca(2+).

The protein resides in the cell membrane. The enzyme catalyses a phosphate monoester + H2O = an alcohol + phosphate. In terms of biological role, alkaline phosphatase that can hydrolyze various phosphate compounds. The sequence is that of Intestinal-type alkaline phosphatase 1 (Alpi) from Rattus norvegicus (Rat).